The chain runs to 663 residues: UvrABC system protein B (663 aa).

The Helicase ATP-binding domain maps to 31–271 (DNIESGEKAQ…EQSISKIQAE (241 aa)). 44 to 51 (GATGTGKT) is an ATP binding site. Positions 97–120 (YYDYYQPEAYVPSSDTYIEKDSSV) match the Beta-hairpin motif. A Helicase C-terminal domain is found at 435-601 (QMDDLLGEIN…TIKKDIRDLI (167 aa)). A UVR domain is found at 627–662 (QEAIKQLQKNMQEAAELLDFELAAQLRDLILELKAI).

Belongs to the UvrB family. As to quaternary structure, forms a heterotetramer with UvrA during the search for lesions. Interacts with UvrC in an incision complex.

It is found in the cytoplasm. The UvrABC repair system catalyzes the recognition and processing of DNA lesions. A damage recognition complex composed of 2 UvrA and 2 UvrB subunits scans DNA for abnormalities. Upon binding of the UvrA(2)B(2) complex to a putative damaged site, the DNA wraps around one UvrB monomer. DNA wrap is dependent on ATP binding by UvrB and probably causes local melting of the DNA helix, facilitating insertion of UvrB beta-hairpin between the DNA strands. Then UvrB probes one DNA strand for the presence of a lesion. If a lesion is found the UvrA subunits dissociate and the UvrB-DNA preincision complex is formed. This complex is subsequently bound by UvrC and the second UvrB is released. If no lesion is found, the DNA wraps around the other UvrB subunit that will check the other stand for damage. The sequence is that of UvrABC system protein B from Streptococcus equi subsp. zooepidemicus (strain MGCS10565).